Reading from the N-terminus, the 314-residue chain is Olfactory receptor 1E1 (314 aa).

Over 1 to 25 (MMGQNQTSISDFLLLGLPIQPEQQN) the chain is Extracellular. N-linked (GlcNAc...) asparagine glycosylation is present at Asn5. Residues 26-49 (LCYALFLAMYLTTLLGNLLIIVLI) traverse the membrane as a helical segment. Over 50–57 (RLDSHLHT) the chain is Cytoplasmic. The helical transmembrane segment at 58 to 79 (PMYLFLSNLSFSDLCFSSVTIP) threads the bilayer. The Extracellular segment spans residues 80–100 (KLLQNMQNQDPSIPYADCLTQ). Cys97 and Cys189 form a disulfide bridge. A helical membrane pass occupies residues 101-120 (MYFFLLFGDLESFLLVAMAY). Over 121-139 (DRYVAICFALHYTAIMSPM) the chain is Cytoplasmic. Residues 140–158 (LCLSLVALSWVLTTFHAML) form a helical membrane-spanning segment. Residues 159–195 (HTLLMARLCFCADNVIPHFFCDMSALLKLACSDTRVN) lie on the Extracellular side of the membrane. A helical transmembrane segment spans residues 196–219 (EWVIFIMGGLIVVIPFLLILGSYA). Over 220 to 236 (RIVSSILKVPSSKGICK) the chain is Cytoplasmic. The helical transmembrane segment at 237–259 (AFSTCGSHLSVVSLFYGTVIGLY) threads the bilayer. Residues 260 to 272 (LCPSANSSTLKET) are Extracellular-facing. Residues 273 to 292 (VMAMMYTVVTPMLNPFIYSL) form a helical membrane-spanning segment. At 293 to 314 (RNGDMKGALSRVIHQKKTFFSL) the chain is on the cytoplasmic side.

The protein belongs to the G-protein coupled receptor 1 family.

The protein localises to the cell membrane. Odorant receptor. This is Olfactory receptor 1E1 (OR1E1) from Gorilla gorilla gorilla (Western lowland gorilla).